A 270-amino-acid chain; its full sequence is MTRRNNPELNDEREPIDKIKASIDLKKKTIRRNKRKRRLIKMLQFLIVIGVLIGIYYFDKSDASRVHNVRVNGNVILSDAEIKDALNIHENQRIYLTFKPFINHKGKKVKGIDNIDANVYYRQGIINLNVTEKKAVGYTLEPSIRIYFEDGFYKELETLNPSVIERLPLLVGFTEESISESLLSALATIDDGSMASVSEIHFEPTKVEPDYMRIVMNNDYFVFTNVETLPQLNKYATIISGADSNARCIEFIEYGPTEETQSAVVKACGS.

The Cytoplasmic segment spans residues 1 to 38; it reads MTRRNNPELNDEREPIDKIKASIDLKKKTIRRNKRKRR. A helical membrane pass occupies residues 39–59; that stretch reads LIKMLQFLIVIGVLIGIYYFD. Residues 60-270 are Extracellular-facing; that stretch reads KSDASRVHNV…QSAVVKACGS (211 aa). One can recognise a POTRA domain in the interval 64–135; sequence SRVHNVRVNG…INLNVTEKKA (72 aa).

Belongs to the FtsQ/DivIB family. DivIB subfamily.

The protein resides in the cell membrane. Its function is as follows. Cell division protein that may be involved in stabilizing or promoting the assembly of the division complex. The sequence is that of Cell division protein DivIB from Erysipelothrix rhusiopathiae (strain Fujisawa).